Here is a 336-residue protein sequence, read N- to C-terminus: Probable allantoicase (336 aa).

This sequence belongs to the allantoicase family.

It carries out the reaction allantoate + H2O = (S)-ureidoglycolate + urea. Its pathway is nitrogen metabolism; (S)-allantoin degradation; (S)-ureidoglycolate from allantoate (aminidohydrolase route): step 1/1. In Acinetobacter baumannii (strain AYE), this protein is Probable allantoicase.